The following is a 53-amino-acid chain: VFGGDECNINEHRSLVVLFDSDGFLCAGTLINKEWVLTAAHCDSENFQMQLGV.

Cysteine 26 and cysteine 42 form a disulfide bridge. The active-site Charge relay system is histidine 41.

In terms of assembly, monomer. Post-translationally, N-glycosylated. As to expression, expressed by the venom gland.

Its subcellular location is the secreted. Its activity is regulated as follows. Inhibited by the small molecule serine protease inhibitors phenylmethylsulfonyl fluoride (PMSF) and benzamidine. Snake venom serine protease that has fibrinogenolytic activity. Hydrolyzes the alpha-chain of fibrinogen (FGA), without affecting the beta- and the gamma-chains. Also displays hydrolytic activity towards S-2302 (plasma kallikrein substrate) and S-2251 (substrate for plasmin), but has no hydrolytic activity with S-2238 (thrombin substrate) or S-2222 (factor Xa). The sequence is that of Snake venom serine protease LmrSP-4 from Lachesis muta rhombeata (Bushmaster).